The sequence spans 192 residues: Bifunctional protein PyrR (192 aa).

Substrate contacts are provided by residues 49 to 50 (SG), arginine 90, 111 to 119 (DDVLFSGRT), arginine 144, and valine 168. Positions 107–119 (VILVDDVLFSGRT) match the PRPP-binding motif.

Belongs to the purine/pyrimidine phosphoribosyltransferase family. PyrR subfamily.

The catalysed reaction is UMP + diphosphate = 5-phospho-alpha-D-ribose 1-diphosphate + uracil. In terms of biological role, regulates the transcription of the pyrimidine nucleotide (pyr) operon in response to exogenous pyrimidines. Its function is as follows. Also displays a weak uracil phosphoribosyltransferase activity which is not physiologically significant. In Corynebacterium glutamicum (strain ATCC 13032 / DSM 20300 / JCM 1318 / BCRC 11384 / CCUG 27702 / LMG 3730 / NBRC 12168 / NCIMB 10025 / NRRL B-2784 / 534), this protein is Bifunctional protein PyrR.